We begin with the raw amino-acid sequence, 466 residues long: L-seryl-tRNA(Sec) selenium transferase (466 aa).

An N6-(pyridoxal phosphate)lysine modification is found at lysine 293.

This sequence belongs to the SelA family. Requires pyridoxal 5'-phosphate as cofactor.

Its subcellular location is the cytoplasm. It catalyses the reaction L-seryl-tRNA(Sec) + selenophosphate + H(+) = L-selenocysteinyl-tRNA(Sec) + phosphate. The protein operates within aminoacyl-tRNA biosynthesis; selenocysteinyl-tRNA(Sec) biosynthesis; selenocysteinyl-tRNA(Sec) from L-seryl-tRNA(Sec) (bacterial route): step 1/1. Functionally, converts seryl-tRNA(Sec) to selenocysteinyl-tRNA(Sec) required for selenoprotein biosynthesis. This is L-seryl-tRNA(Sec) selenium transferase from Desulfotalea psychrophila (strain LSv54 / DSM 12343).